A 109-amino-acid polypeptide reads, in one-letter code: uncharacterized protein (109 aa).

This is an uncharacterized protein from Escherichia coli (strain K12).